A 475-amino-acid polypeptide reads, in one-letter code: Chromosomal replication initiator protein DnaA (475 aa).

The tract at residues 1–71 is domain I, interacts with DnaA modulators; that stretch reads MTNDTWNEVR…RQLSAHGAGA (71 aa). The tract at residues 71 to 133 is domain II; that stretch reads ADRVKFTVSP…PAQPRELPGA (63 aa). The segment covering 107 to 127 has biased composition (low complexity); it reads APAPVHHTAPAPAPVAAPAQP. Positions 107–129 are disordered; that stretch reads APAPVHHTAPAPAPVAAPAQPRE. Positions 134-355 are domain III, AAA+ region; that stretch reads KLNPNFTFAN…GALTRLFAFA (222 aa). ATP contacts are provided by glycine 178, glycine 180, lysine 181, and threonine 182. Residues 356 to 475 are domain IV, binds dsDNA; sequence DLVRREVTVD…AELLRRTLEA (120 aa).

Belongs to the DnaA family. As to quaternary structure, oligomerizes as a right-handed, spiral filament on DNA at oriC.

Its subcellular location is the cytoplasm. Functionally, plays an essential role in the initiation and regulation of chromosomal replication. ATP-DnaA binds to the origin of replication (oriC) to initiate formation of the DNA replication initiation complex once per cell cycle. Binds the DnaA box (a 9 base pair repeat at the origin) and separates the double-stranded (ds)DNA. Forms a right-handed helical filament on oriC DNA; dsDNA binds to the exterior of the filament while single-stranded (ss)DNA is stabiized in the filament's interior. The ATP-DnaA-oriC complex binds and stabilizes one strand of the AT-rich DNA unwinding element (DUE), permitting loading of DNA polymerase. After initiation quickly degrades to an ADP-DnaA complex that is not apt for DNA replication. Binds acidic phospholipids. This Jannaschia sp. (strain CCS1) protein is Chromosomal replication initiator protein DnaA.